The following is a 574-amino-acid chain: Probable E3 ubiquitin-protein ligase ipaH4.5 (574 aa).

The interval 1-284 (MKPINNHSFF…YHGPQIYFSM (284 aa)) is interaction with target proteins. LRR repeat units lie at residues 63-82 (REPVLNLSLLKLRSLPPLPL), 83-104 (HIRELNISNNELISLPENSPLL), 105-122 (TELHVNGNNLNILPTLPS), 123-143 (QLIKLNISFNRNLSCLPSLPP), 144-165 (YLQSLSARFNSLETLPELPSTL), 166-183 (TILRIEGNRLTVLPELPH), 184-205 (RLQELFVSGNRLQELPEFPQSL), 206-223 (KYLKVGENQLRRLSRLPQ), 224-246 (ELLALDVSNNLLTSLPENIITLP), and 247-270 (ICTNVNISGNPLSTHVLQSLQRLT). The interval 285-292 (SDGQQNTL) is linker. Residues 293-574 (HRPLADAVTA…YRQLTDEVLA (282 aa)) are E3 ubiquitin-protein ligase catalytic domain. Residues 295–574 (PLADAVTAWF…YRQLTDEVLA (280 aa)) enclose the NEL domain. Cys379 acts as the Glycyl thioester intermediate in catalysis.

This sequence belongs to the LRR-containing bacterial E3 ligase family. Post-translationally, ubiquitinated in the presence of host E1 ubiquitin-activating enzyme, E2 ubiquitin-conjugating enzyme and ubiquitin.

Its subcellular location is the secreted. It is found in the host cytoplasm. The enzyme catalyses S-ubiquitinyl-[E2 ubiquitin-conjugating enzyme]-L-cysteine + [acceptor protein]-L-lysine = [E2 ubiquitin-conjugating enzyme]-L-cysteine + N(6)-ubiquitinyl-[acceptor protein]-L-lysine.. Effector proteins function to alter host cell physiology and promote bacterial survival in host tissues. This protein is an E3 ubiquitin ligase that interferes with host's ubiquitination pathway. The sequence is that of Probable E3 ubiquitin-protein ligase ipaH4.5 (ipaH4.5) from Shigella flexneri.